A 242-amino-acid chain; its full sequence is Phosphoribosylaminoimidazole-succinocarboxamide synthase (242 aa).

It belongs to the SAICAR synthetase family.

The enzyme catalyses 5-amino-1-(5-phospho-D-ribosyl)imidazole-4-carboxylate + L-aspartate + ATP = (2S)-2-[5-amino-1-(5-phospho-beta-D-ribosyl)imidazole-4-carboxamido]succinate + ADP + phosphate + 2 H(+). The protein operates within purine metabolism; IMP biosynthesis via de novo pathway; 5-amino-1-(5-phospho-D-ribosyl)imidazole-4-carboxamide from 5-amino-1-(5-phospho-D-ribosyl)imidazole-4-carboxylate: step 1/2. In Cyanothece sp. (strain PCC 7425 / ATCC 29141), this protein is Phosphoribosylaminoimidazole-succinocarboxamide synthase.